We begin with the raw amino-acid sequence, 121 residues long: Protein yippee (121 aa).

A Yippee domain is found at 13–110 (KLFNCAQCHT…LEYALITEAE (98 aa)). 4 residues coordinate Zn(2+): C17, C20, C73, and C76.

The protein belongs to the yippee family. In terms of assembly, interacts with hemolin.

The protein is Protein yippee of Drosophila melanogaster (Fruit fly).